The following is a 375-amino-acid chain: N5-carboxyaminoimidazole ribonucleotide synthase (375 aa).

ATP-binding positions include arginine 108, lysine 148, 153 to 159, 183 to 186, glutamate 191, histidine 214, and 266 to 267; these read GYDGKGQ, EQYL, and NE. Positions 112-296 constitute an ATP-grasp domain; that stretch reads KQTLLEANTQ…QFDTHILAIT (185 aa).

Belongs to the PurK/PurT family. Homodimer.

It carries out the reaction 5-amino-1-(5-phospho-beta-D-ribosyl)imidazole + hydrogencarbonate + ATP = 5-carboxyamino-1-(5-phospho-D-ribosyl)imidazole + ADP + phosphate + 2 H(+). It participates in purine metabolism; IMP biosynthesis via de novo pathway; 5-amino-1-(5-phospho-D-ribosyl)imidazole-4-carboxylate from 5-amino-1-(5-phospho-D-ribosyl)imidazole (N5-CAIR route): step 1/2. In terms of biological role, catalyzes the ATP-dependent conversion of 5-aminoimidazole ribonucleotide (AIR) and HCO(3)(-) to N5-carboxyaminoimidazole ribonucleotide (N5-CAIR). The chain is N5-carboxyaminoimidazole ribonucleotide synthase from Staphylococcus epidermidis (strain ATCC 12228 / FDA PCI 1200).